We begin with the raw amino-acid sequence, 154 residues long: Putative nickel-responsive regulator (154 aa).

Ni(2+) contacts are provided by His-95, His-106, His-108, and Cys-114.

Belongs to the transcriptional regulatory CopG/NikR family. Ni(2+) is required as a cofactor.

Transcriptional regulator. The protein is Putative nickel-responsive regulator of Caldanaerobacter subterraneus subsp. tengcongensis (strain DSM 15242 / JCM 11007 / NBRC 100824 / MB4) (Thermoanaerobacter tengcongensis).